Consider the following 707-residue polypeptide: Transcription termination factor Rho (707 aa).

Disordered regions lie at residues 1–38 and 76–321; these read MSDT…RRGT and QAAG…DEIQ. Low complexity-rich tracts occupy residues 16 to 31 and 76 to 93; these read AAAP…TGAG and QAAG…ADTA. A compositionally biased stretch (basic and acidic residues) spans 107 to 132; it reads RTGDEAPAEKAEKAGKADKKADKAAA. Over residues 153 to 163 the composition is skewed to low complexity; it reads ASAEQAAPADD. A compositionally biased stretch (polar residues) spans 176–188; that stretch reads DAGSPSATDTTVA. A compositionally biased stretch (low complexity) spans 203 to 213; the sequence is QQSQGHQQGQG. Basic and acidic residues predominate over residues 215–265; that stretch reads ARSDAEGGDGRRRDRRDRGDRDRGDRGDRGDRGDRGDRGERGRDRRNKGDD. Basic residues predominate over residues 301–315; it reads RRGRRGRYRDRRGRR. Residues 331–406 enclose the Rho RNA-BD domain; it reads LIPVAGILDI…VRLDSVNGMA (76 aa). ATP-binding positions include 449-454, 461-466, and R492; these read GKGQRG and KTGKTM.

This sequence belongs to the Rho family. As to quaternary structure, homohexamer. The homohexamer assembles into an open ring structure.

Its function is as follows. Facilitates transcription termination by a mechanism that involves Rho binding to the nascent RNA, activation of Rho's RNA-dependent ATPase activity, and release of the mRNA from the DNA template. The sequence is that of Transcription termination factor Rho from Streptomyces lividans.